A 523-amino-acid chain; its full sequence is 2-isopropylmalate synthase (523 aa).

One can recognise a Pyruvate carboxyltransferase domain in the interval 12–274; it reads VVIFDTTLRD…WNKIDTTQLT (263 aa). Residues aspartate 21, histidine 209, histidine 211, and asparagine 245 each coordinate Mn(2+). Positions 398–523 are regulatory domain; it reads KLLSLSVIAG…AQGAAAAAAS (126 aa).

The protein belongs to the alpha-IPM synthase/homocitrate synthase family. LeuA type 1 subfamily. In terms of assembly, homodimer. It depends on Mn(2+) as a cofactor.

The protein localises to the cytoplasm. The enzyme catalyses 3-methyl-2-oxobutanoate + acetyl-CoA + H2O = (2S)-2-isopropylmalate + CoA + H(+). It functions in the pathway amino-acid biosynthesis; L-leucine biosynthesis; L-leucine from 3-methyl-2-oxobutanoate: step 1/4. Its function is as follows. Catalyzes the condensation of the acetyl group of acetyl-CoA with 3-methyl-2-oxobutanoate (2-ketoisovalerate) to form 3-carboxy-3-hydroxy-4-methylpentanoate (2-isopropylmalate). In Bradyrhizobium sp. (strain BTAi1 / ATCC BAA-1182), this protein is 2-isopropylmalate synthase.